Reading from the N-terminus, the 325-residue chain is Eukaryotic translation initiation factor 3 subunit I (325 aa).

5 WD repeats span residues 8 to 47 (GHER…RLGT), 50 to 91 (GHTG…ALLQ), 144 to 183 (CSES…IVNS), 186 to 225 (EHSK…HQKT), and 283 to 324 (GHFG…FEFE).

It belongs to the eIF-3 subunit I family. As to quaternary structure, component of the eukaryotic translation initiation factor 3 (eIF-3) complex, which is composed of 13 subunits: eif3a, eif3b, eif3c, eif3d, eif3e, eif3f, eif3g, eif3h, eif3i, eif3j, eif3k, eif3l and eif3m.

The protein localises to the cytoplasm. Component of the eukaryotic translation initiation factor 3 (eIF-3) complex, which is involved in protein synthesis of a specialized repertoire of mRNAs and, together with other initiation factors, stimulates binding of mRNA and methionyl-tRNAi to the 40S ribosome. The eIF-3 complex specifically targets and initiates translation of a subset of mRNAs involved in cell proliferation. The chain is Eukaryotic translation initiation factor 3 subunit I (eif3i) from Xenopus laevis (African clawed frog).